Here is a 516-residue protein sequence, read N- to C-terminus: Bifunctional purine biosynthesis protein PurH (516 aa).

The MGS-like domain occupies 1–146 (MTRLALLSVS…KNYAHVTVLS (146 aa)).

The protein belongs to the PurH family.

The catalysed reaction is (6R)-10-formyltetrahydrofolate + 5-amino-1-(5-phospho-beta-D-ribosyl)imidazole-4-carboxamide = 5-formamido-1-(5-phospho-D-ribosyl)imidazole-4-carboxamide + (6S)-5,6,7,8-tetrahydrofolate. The enzyme catalyses IMP + H2O = 5-formamido-1-(5-phospho-D-ribosyl)imidazole-4-carboxamide. The protein operates within purine metabolism; IMP biosynthesis via de novo pathway; 5-formamido-1-(5-phospho-D-ribosyl)imidazole-4-carboxamide from 5-amino-1-(5-phospho-D-ribosyl)imidazole-4-carboxamide (10-formyl THF route): step 1/1. It participates in purine metabolism; IMP biosynthesis via de novo pathway; IMP from 5-formamido-1-(5-phospho-D-ribosyl)imidazole-4-carboxamide: step 1/1. The polypeptide is Bifunctional purine biosynthesis protein PurH (Rippkaea orientalis (strain PCC 8801 / RF-1) (Cyanothece sp. (strain PCC 8801))).